Here is a 176-residue protein sequence, read N- to C-terminus: 3-hydroxydecanoyl-[acyl-carrier-protein] dehydratase (176 aa).

The active site involves His-71.

This sequence belongs to the thioester dehydratase family. FabA subfamily. As to quaternary structure, homodimer.

Its subcellular location is the cytoplasm. It carries out the reaction a (3R)-hydroxyacyl-[ACP] = a (2E)-enoyl-[ACP] + H2O. It catalyses the reaction (3R)-hydroxydecanoyl-[ACP] = (2E)-decenoyl-[ACP] + H2O. The enzyme catalyses (2E)-decenoyl-[ACP] = (3Z)-decenoyl-[ACP]. Its pathway is lipid metabolism; fatty acid biosynthesis. In terms of biological role, necessary for the introduction of cis unsaturation into fatty acids. Catalyzes the dehydration of (3R)-3-hydroxydecanoyl-ACP to E-(2)-decenoyl-ACP and then its isomerization to Z-(3)-decenoyl-ACP. Can catalyze the dehydratase reaction for beta-hydroxyacyl-ACPs with saturated chain lengths up to 16:0, being most active on intermediate chain length. In Rhodopseudomonas palustris (strain HaA2), this protein is 3-hydroxydecanoyl-[acyl-carrier-protein] dehydratase.